We begin with the raw amino-acid sequence, 717 residues long: ATP-dependent zinc metalloprotease FtsH (717 aa).

The Cytoplasmic segment spans residues 1–9 (MKNASRIFK). Residues 10-30 (GPLIWILLCIGLIIVFLQFAG) form a helical membrane-spanning segment. The Extracellular portion of the chain corresponds to 31–111 (SGNGYKDIPT…SWQGENPGQS (81 aa)). Residues 112–132 (IWKALLINFLPFVIILLFFLW) traverse the membrane as a helical segment. Residues 133–717 (AMNAAQGMGG…NGNPWGPPRS (585 aa)) lie on the Cytoplasmic side of the membrane. An ATP-binding site is contributed by 207 to 214 (GPPGTGKT). Position 429 (His-429) interacts with Zn(2+). The active site involves Glu-430. The Zn(2+) site is built by His-433 and Asp-505. Residues 617-717 (AFTGSDKRVP…NGNPWGPPRS (101 aa)) are disordered. Pro residues predominate over residues 691 to 717 (PEPPSPTHPGEGPQPPSNGNPWGPPRS).

The protein in the central section; belongs to the AAA ATPase family. This sequence in the C-terminal section; belongs to the peptidase M41 family. As to quaternary structure, homohexamer. Requires Zn(2+) as cofactor.

Its subcellular location is the cell membrane. Functionally, acts as a processive, ATP-dependent zinc metallopeptidase for both cytoplasmic and membrane proteins. Plays a role in the quality control of integral membrane proteins. The protein is ATP-dependent zinc metalloprotease FtsH of Cutibacterium acnes (strain SK137) (Propionibacterium acnes).